We begin with the raw amino-acid sequence, 341 residues long: MRMFRESKSEEKKSPSSQTAGLFATVPSLKDIMIDRLIEQLGGIAELNKQVVRDPRLWGAINERLTQHFLLLVVQGKQGQVEAMLKVNPALILFARGDVTDYSGQTFKNISAWEYVLWAYDSHMYRMLFNYIPKEQRPLALQQLIDLETNGIAYTLSEKVMNAEREAEETRETIIREAHYDFSPLIDALQTYVTNVERWSFEECVEHWRKKVGGAQCMVPVHVGNEYCYPDRSFDPIPRFNEKNLPRRHNFYNYVSGADESWFPLSPAGLGTNFAIMRGCMRAVAGACWRVGRQWACNDLAAITALREVRQSDLIQLKEQLQNPAPESAPSTSKTLRSKNP.

Residues 153–179 are a coiled coil; that stretch reads AYTLSEKVMNAEREAEETRETIIREAH. Over residues 319–335 the composition is skewed to polar residues; it reads EQLQNPAPESAPSTSKT. A disordered region spans residues 319–341; that stretch reads EQLQNPAPESAPSTSKTLRSKNP.

This is an uncharacterized protein from Coxiella burnetii (strain RSA 493 / Nine Mile phase I).